We begin with the raw amino-acid sequence, 447 residues long: tRNA-2-methylthio-N(6)-dimethylallyladenosine synthase (447 aa).

An MTTase N-terminal domain is found at Lys10–Gln128. [4Fe-4S] cluster-binding residues include Cys19, Cys55, Cys89, Cys165, Cys169, and Cys172. Residues Arg151–Lys382 form the Radical SAM core domain. Residues Lys384–Glu447 enclose the TRAM domain.

Belongs to the methylthiotransferase family. MiaB subfamily. In terms of assembly, monomer. It depends on [4Fe-4S] cluster as a cofactor.

It localises to the cytoplasm. The catalysed reaction is N(6)-dimethylallyladenosine(37) in tRNA + (sulfur carrier)-SH + AH2 + 2 S-adenosyl-L-methionine = 2-methylsulfanyl-N(6)-dimethylallyladenosine(37) in tRNA + (sulfur carrier)-H + 5'-deoxyadenosine + L-methionine + A + S-adenosyl-L-homocysteine + 2 H(+). Functionally, catalyzes the methylthiolation of N6-(dimethylallyl)adenosine (i(6)A), leading to the formation of 2-methylthio-N6-(dimethylallyl)adenosine (ms(2)i(6)A) at position 37 in tRNAs that read codons beginning with uridine. The protein is tRNA-2-methylthio-N(6)-dimethylallyladenosine synthase of Clostridium perfringens (strain SM101 / Type A).